The primary structure comprises 102 residues: Large ribosomal subunit protein uL23 (102 aa).

It belongs to the universal ribosomal protein uL23 family. In terms of assembly, part of the 50S ribosomal subunit. Contacts protein L29, and trigger factor when it is bound to the ribosome.

Functionally, one of the early assembly proteins it binds 23S rRNA. One of the proteins that surrounds the polypeptide exit tunnel on the outside of the ribosome. Forms the main docking site for trigger factor binding to the ribosome. This is Large ribosomal subunit protein uL23 from Chromobacterium violaceum (strain ATCC 12472 / DSM 30191 / JCM 1249 / CCUG 213 / NBRC 12614 / NCIMB 9131 / NCTC 9757 / MK).